The sequence spans 960 residues: Isoleucine--tRNA ligase (960 aa).

The 'HIGH' region signature appears at 82–92 (PYANGHIHIGH). Glutamate 606 provides a ligand contact to L-isoleucyl-5'-AMP. A 'KMSKS' region motif is present at residues 647-651 (KMSKS). Lysine 650 contributes to the ATP binding site. Cysteine 931, cysteine 934, cysteine 951, and cysteine 954 together coordinate Zn(2+).

It belongs to the class-I aminoacyl-tRNA synthetase family. IleS type 1 subfamily. In terms of assembly, monomer. It depends on Zn(2+) as a cofactor.

It localises to the cytoplasm. It catalyses the reaction tRNA(Ile) + L-isoleucine + ATP = L-isoleucyl-tRNA(Ile) + AMP + diphosphate. Functionally, catalyzes the attachment of isoleucine to tRNA(Ile). As IleRS can inadvertently accommodate and process structurally similar amino acids such as valine, to avoid such errors it has two additional distinct tRNA(Ile)-dependent editing activities. One activity is designated as 'pretransfer' editing and involves the hydrolysis of activated Val-AMP. The other activity is designated 'posttransfer' editing and involves deacylation of mischarged Val-tRNA(Ile). This Gluconobacter oxydans (strain 621H) (Gluconobacter suboxydans) protein is Isoleucine--tRNA ligase.